The primary structure comprises 373 residues: Chaperone protein DnaJ (373 aa).

The region spanning 4–69 (DYYETLSVER…SKRRIYDTYG (66 aa)) is the J domain. The CR-type zinc finger occupies 131-209 (GVSKEVKLSR…CHGEGLVKKT (79 aa)). Zn(2+) contacts are provided by C144, C147, C161, C164, C183, C186, C197, and C200. CXXCXGXG motif repeat units lie at residues 144–151 (CWTCEGTG), 161–168 (CPTCNGRG), 183–190 (CPECEGEG), and 197–204 (CNDCHGEG).

The protein belongs to the DnaJ family. As to quaternary structure, homodimer. Zn(2+) is required as a cofactor.

It is found in the cytoplasm. In terms of biological role, participates actively in the response to hyperosmotic and heat shock by preventing the aggregation of stress-denatured proteins and by disaggregating proteins, also in an autonomous, DnaK-independent fashion. Unfolded proteins bind initially to DnaJ; upon interaction with the DnaJ-bound protein, DnaK hydrolyzes its bound ATP, resulting in the formation of a stable complex. GrpE releases ADP from DnaK; ATP binding to DnaK triggers the release of the substrate protein, thus completing the reaction cycle. Several rounds of ATP-dependent interactions between DnaJ, DnaK and GrpE are required for fully efficient folding. Also involved, together with DnaK and GrpE, in the DNA replication of plasmids through activation of initiation proteins. The polypeptide is Chaperone protein DnaJ (Desulfotalea psychrophila (strain LSv54 / DSM 12343)).